Here is a 195-residue protein sequence, read N- to C-terminus: Putative manganese efflux pump MntP (195 aa).

6 helical membrane-spanning segments follow: residues 4-24 (ILIT…SLAM), 39-59 (FVLT…NLGL), 64-84 (FLGV…GWQM), 120-140 (ILLL…TLGT), 145-165 (ILIT…VGFA), and 175-195 (GSYA…KFVV).

Belongs to the MntP (TC 9.B.29) family.

It is found in the cell membrane. In terms of biological role, probably functions as a manganese efflux pump. The chain is Putative manganese efflux pump MntP from Syntrophomonas wolfei subsp. wolfei (strain DSM 2245B / Goettingen).